Consider the following 104-residue polypeptide: Protein S100-A14 (104 aa).

Residues 27–61 form the EF-hand domain; sequence KNFHQYSVEGGKETLTPSELRDLVTQQLPHLMPSN.

Belongs to the S-100 family. Homodimer. Interacts with AGER.

The protein localises to the cytoplasm. Its function is as follows. Modulates P53/TP53 protein levels, and thereby plays a role in the regulation of cell survival and apoptosis. Depending on the context, it can promote cell proliferation or apoptosis. Plays a role in the regulation of cell migration by modulating the levels of MMP2, a matrix protease that is under transcriptional control of P53/TP53. Does not bind calcium. The polypeptide is Protein S100-A14 (S100A14) (Bos taurus (Bovine)).